The following is a 745-amino-acid chain: Phosphoribosylformylglycinamidine synthase subunit PurL (745 aa).

Residue histidine 41 is part of the active site. 2 residues coordinate ATP: tyrosine 44 and lysine 83. Glutamate 85 provides a ligand contact to Mg(2+). Residues 86–89 (SHNH) and arginine 108 contribute to the substrate site. The active-site Proton acceptor is the histidine 87. Aspartate 109 is a binding site for Mg(2+). Glutamine 232 serves as a coordination point for substrate. Aspartate 260 is a Mg(2+) binding site. 304–306 (ESQ) provides a ligand contact to substrate. ATP contacts are provided by aspartate 494 and glycine 531. Mg(2+) is bound at residue asparagine 532. Serine 534 lines the substrate pocket.

Belongs to the FGAMS family. In terms of assembly, monomer. Part of the FGAM synthase complex composed of 1 PurL, 1 PurQ and 2 PurS subunits.

The protein localises to the cytoplasm. It catalyses the reaction N(2)-formyl-N(1)-(5-phospho-beta-D-ribosyl)glycinamide + L-glutamine + ATP + H2O = 2-formamido-N(1)-(5-O-phospho-beta-D-ribosyl)acetamidine + L-glutamate + ADP + phosphate + H(+). It functions in the pathway purine metabolism; IMP biosynthesis via de novo pathway; 5-amino-1-(5-phospho-D-ribosyl)imidazole from N(2)-formyl-N(1)-(5-phospho-D-ribosyl)glycinamide: step 1/2. Functionally, part of the phosphoribosylformylglycinamidine synthase complex involved in the purines biosynthetic pathway. Catalyzes the ATP-dependent conversion of formylglycinamide ribonucleotide (FGAR) and glutamine to yield formylglycinamidine ribonucleotide (FGAM) and glutamate. The FGAM synthase complex is composed of three subunits. PurQ produces an ammonia molecule by converting glutamine to glutamate. PurL transfers the ammonia molecule to FGAR to form FGAM in an ATP-dependent manner. PurS interacts with PurQ and PurL and is thought to assist in the transfer of the ammonia molecule from PurQ to PurL. In Aquifex aeolicus (strain VF5), this protein is Phosphoribosylformylglycinamidine synthase subunit PurL.